The chain runs to 533 residues: Receptor homology region, transmembrane domain- and RING domain-containing protein 1 (533 aa).

Positions 1–26 (MNRRRTMLLLICLCATFCLMTQLGAA) are cleaved as a signal peptide. Residues 27 to 167 (NVVLMGTNLT…LPAFENSAWS (141 aa)) are Lumenal-facing. Asn-34 carries N-linked (GlcNAc...) asparagine glycosylation. The cysteines at positions 68 and 91 are disulfide-linked. Residues 84–145 (ALIIRGGCTF…ISKASGEVLK (62 aa)) form the PA domain. The chain crosses the membrane as a helical span at residues 168 to 188 (IMAISFISLLAMSAVLATCFF). Topologically, residues 189–533 (VRRHHIRRDR…MASAQSLPGC (345 aa)) are cytoplasmic. The segment at 236–278 (CAICLEDYNVGEKLRVLPCRHKFHAACVDLWLTTWRTFCPVCK) adopts an RING-type; atypical zinc-finger fold. Disordered regions lie at residues 309 to 329 (SFRS…PSSQ) and 440 to 476 (LRRC…LAGA). The segment covering 448 to 463 (PSLSTMAPQSPQQSQL) has biased composition (polar residues).

Its subcellular location is the prevacuolar compartment membrane. The protein resides in the protein storage vacuole membrane. It is found in the golgi apparatus membrane. Its function is as follows. Involved in the trafficking of vacuolar proteins. Functions probably as a sorting receptor for protein trafficking to the protein storage vacuole (PSV) by binding the C-terminal vacuolar sorting determinant (VSD) of vacuolar-sorted proteins. The polypeptide is Receptor homology region, transmembrane domain- and RING domain-containing protein 1 (Oryza sativa subsp. japonica (Rice)).